The sequence spans 282 residues: Glycine/sarcosine N-methyltransferase (282 aa).

Polar residues predominate over residues 1-23 (MTSTQNHPLQTQDDQQRFGQSPE). Positions 1-27 (MTSTQNHPLQTQDDQQRFGQSPESVRE) are disordered. S-adenosyl-L-methionine is bound by residues Tyr-35, Trp-43, Arg-52, Ala-76, Asp-97, 123 to 124 (DW), and Leu-141. Substrate is bound by residues Asn-143, Arg-176, and Tyr-217.

The protein belongs to the class I-like SAM-binding methyltransferase superfamily. Glycine N-methyltransferase family. In terms of assembly, monomer.

It carries out the reaction glycine + 2 S-adenosyl-L-methionine = N,N-dimethylglycine + 2 S-adenosyl-L-homocysteine + 2 H(+). The catalysed reaction is glycine + S-adenosyl-L-methionine = sarcosine + S-adenosyl-L-homocysteine + H(+). It catalyses the reaction sarcosine + S-adenosyl-L-methionine = N,N-dimethylglycine + S-adenosyl-L-homocysteine + H(+). The protein operates within amine and polyamine biosynthesis; betaine biosynthesis via glycine pathway; betaine from glycine: step 1/3. It participates in amine and polyamine biosynthesis; betaine biosynthesis via glycine pathway; betaine from glycine: step 2/3. Functionally, catalyzes the methylation of glycine and sarcosine to sarcosine and dimethylglycine, respectively, with S-adenosylmethionine (AdoMet) acting as the methyl donor. It has strict specificity for glycine and sarcosine as the methyl group acceptors. This chain is Glycine/sarcosine N-methyltransferase, found in Parasynechococcus marenigrum (strain WH8102).